The sequence spans 373 residues: Centrosomal protein of 41 kDa (373 aa).

The segment at 91–137 (LEDNDSATSEADAEIAAKTNGKGSPEEQSPSPVQFINSTGAGDSSRS) is disordered. Serine 96 and serine 99 each carry phosphoserine. Threonine 109 is subject to Phosphothreonine. Phosphoserine occurs at positions 114 and 121. The segment covering 116–137 (EEQSPSPVQFINSTGAGDSSRS) has biased composition (polar residues). The 98-residue stretch at 169–266 (PDCPFLLLDV…LAQKFPEGLV (98 aa)) folds into the Rhodanese domain. The interval 317-373 (DQGPADNPSRLNQNNSAGKDSKVAACRGGQNLPTSCPASHSSPRTLTSGHLQGKPWK) is disordered. The span at 325–334 (SRLNQNNSAG) shows a compositional bias: polar residues. Position 343 is an omega-N-methylarginine (arginine 343). Residues 347 to 366 (NLPTSCPASHSSPRTLTSGH) are compositionally biased toward polar residues.

It belongs to the CEP41 family. In terms of assembly, found in a complex with TTLL6.

It localises to the cytoplasm. The protein resides in the cytoskeleton. The protein localises to the microtubule organizing center. Its subcellular location is the centrosome. It is found in the cell projection. It localises to the cilium. The protein resides in the cilium basal body. Its function is as follows. Required during ciliogenesis for tubulin glutamylation in cilium. Probably acts by participating in the transport of TTLL6, a tubulin polyglutamylase, between the basal body and the cilium. This is Centrosomal protein of 41 kDa (Cep41) from Mus musculus (Mouse).